The chain runs to 243 residues: Orotidine 5'-phosphate decarboxylase (243 aa).

Substrate contacts are provided by residues Asp-18, Lys-39, Asp-66–Thr-75, Thr-130, Arg-192, Gln-201, Gly-221, and Arg-222. Lys-68 acts as the Proton donor in catalysis.

The protein belongs to the OMP decarboxylase family. Type 1 subfamily. In terms of assembly, homodimer.

The enzyme catalyses orotidine 5'-phosphate + H(+) = UMP + CO2. It participates in pyrimidine metabolism; UMP biosynthesis via de novo pathway; UMP from orotate: step 2/2. Functionally, catalyzes the decarboxylation of orotidine 5'-monophosphate (OMP) to uridine 5'-monophosphate (UMP). The protein is Orotidine 5'-phosphate decarboxylase of Synechococcus sp. (strain CC9902).